Here is a 310-residue protein sequence, read N- to C-terminus: Probable GTP 3',8-cyclase (310 aa).

Residues Lys5–Arg218 enclose the Radical SAM core domain. GTP is bound at residue Arg14. [4Fe-4S] cluster-binding residues include Cys21, Cys25, and Cys28. Lys62 serves as a coordination point for GTP. Gly66 contacts S-adenosyl-L-methionine. A GTP-binding site is contributed by Thr91. Position 115 (Ser115) interacts with S-adenosyl-L-methionine. Lys153 contacts GTP. [4Fe-4S] cluster contacts are provided by Cys251, Cys254, and Cys268.

This sequence belongs to the radical SAM superfamily. MoaA family. [4Fe-4S] cluster is required as a cofactor.

The catalysed reaction is GTP + AH2 + S-adenosyl-L-methionine = (8S)-3',8-cyclo-7,8-dihydroguanosine 5'-triphosphate + 5'-deoxyadenosine + L-methionine + A + H(+). It functions in the pathway cofactor biosynthesis; molybdopterin biosynthesis. In terms of biological role, catalyzes the cyclization of GTP to (8S)-3',8-cyclo-7,8-dihydroguanosine 5'-triphosphate. This is Probable GTP 3',8-cyclase from Pyrobaculum aerophilum (strain ATCC 51768 / DSM 7523 / JCM 9630 / CIP 104966 / NBRC 100827 / IM2).